The primary structure comprises 358 residues: Methylthioribose-1-phosphate isomerase (358 aa).

Substrate contacts are provided by residues 54 to 56 (RGA), arginine 96, and glutamine 205. Aspartate 246 (proton donor) is an active-site residue. Substrate is bound at residue 256-257 (AK).

This sequence belongs to the eIF-2B alpha/beta/delta subunits family. MtnA subfamily.

It carries out the reaction 5-(methylsulfanyl)-alpha-D-ribose 1-phosphate = 5-(methylsulfanyl)-D-ribulose 1-phosphate. It participates in amino-acid biosynthesis; L-methionine biosynthesis via salvage pathway; L-methionine from S-methyl-5-thio-alpha-D-ribose 1-phosphate: step 1/6. Functionally, catalyzes the interconversion of methylthioribose-1-phosphate (MTR-1-P) into methylthioribulose-1-phosphate (MTRu-1-P). This Pseudomonas entomophila (strain L48) protein is Methylthioribose-1-phosphate isomerase.